Reading from the N-terminus, the 529-residue chain is Tyrosine--tRNA ligase, cytoplasmic (529 aa).

Tyr-39 provides a ligand contact to L-tyrosine. The 'HIGH' region signature appears at 44-52 (TTGKPHVAY). Positions 166, 170, 173, and 188 each coordinate L-tyrosine. The short motif at 222 to 226 (KMSSS) is the 'KMSKS' region element. The short motif at 242 to 247 (KKKLKK) is the Nuclear localization signal element. The tract at residues 335–362 (KLTSSAYPEPSKNKGGVKGNPKQTTDDD) is disordered. Residues 365–469 (IPSRLDIRVG…EGSAAGDRVY (105 aa)) form the tRNA-binding domain.

Belongs to the class-I aminoacyl-tRNA synthetase family. In terms of assembly, homodimer.

It localises to the cytoplasm. It is found in the nucleus. It catalyses the reaction tRNA(Tyr) + L-tyrosine + ATP = L-tyrosyl-tRNA(Tyr) + AMP + diphosphate + H(+). Functionally, catalyzes the attachment of tyrosine to tRNA(Tyr) in a two-step reaction: tyrosine is first activated by ATP to form Tyr-AMP and then transferred to the acceptor end of tRNA(Tyr). The chain is Tyrosine--tRNA ligase, cytoplasmic (yars1) from Danio rerio (Zebrafish).